We begin with the raw amino-acid sequence, 485 residues long: Adenosylhomocysteinase (485 aa).

Positions 64, 139, and 205 each coordinate substrate. NAD(+) is bound at residue 206–208 (TTT). Residues Lys235 and Asp239 each coordinate substrate. Residues Asn240, 269-274 (GYGDVG), Glu292, Asn327, and 348-350 (IGH) contribute to the NAD(+) site.

This sequence belongs to the adenosylhomocysteinase family. As to quaternary structure, homotetramer. NAD(+) is required as a cofactor.

The enzyme catalyses S-adenosyl-L-homocysteine + H2O = L-homocysteine + adenosine. It participates in amino-acid biosynthesis; L-homocysteine biosynthesis; L-homocysteine from S-adenosyl-L-homocysteine: step 1/1. Its function is as follows. Adenosylhomocysteine is a competitive inhibitor of S-adenosyl-L-methionine-dependent methyl transferase reactions; therefore adenosylhomocysteinase may play a key role in the control of methylations via regulation of the intracellular concentration of adenosylhomocysteine. This Mesembryanthemum crystallinum (Common ice plant) protein is Adenosylhomocysteinase (SAHH).